We begin with the raw amino-acid sequence, 126 residues long: Large ribosomal subunit protein bL12 (126 aa).

Belongs to the bacterial ribosomal protein bL12 family. As to quaternary structure, homodimer. Part of the ribosomal stalk of the 50S ribosomal subunit. Forms a multimeric L10(L12)X complex, where L10 forms an elongated spine to which 2 to 4 L12 dimers bind in a sequential fashion. Binds GTP-bound translation factors.

Forms part of the ribosomal stalk which helps the ribosome interact with GTP-bound translation factors. Is thus essential for accurate translation. In Paracidovorax citrulli (strain AAC00-1) (Acidovorax citrulli), this protein is Large ribosomal subunit protein bL12.